Reading from the N-terminus, the 582-residue chain is Regulatory solute carrier protein family 1 member 1 (582 aa).

Disordered stretches follow at residues 1 to 32 (MSSL…ARSV), 56 to 76 (KASA…LQVL), 143 to 180 (EKSW…VPQD), 303 to 325 (VDMS…HGQP), 363 to 384 (VTCQ…SGRR), 390 to 409 (LTPS…SESG), 426 to 452 (ASTS…ESAR), and 483 to 529 (SEGA…LSTP). Residues 16-32 (SGQSPEVGSPTSLARSV) are compositionally biased toward polar residues. Over residues 148–179 (PENQTPSPVNGLQQHRETGSVQREAGQQSVPQ) the composition is skewed to polar residues. The segment covering 390-408 (LTPSDQYSQGSCHQATSES) has biased composition (polar residues). 2 stretches are compositionally biased toward basic and acidic residues: residues 438–452 (SPDR…ESAR) and 490–503 (PSEH…DRPE). The 41-residue stretch at 536–576 (IFPAADVDRILGAGFTLQEALGALHRVGGNADLALLVLLAK) folds into the UBA domain.

In terms of assembly, interacts with YRDC. Expressed in epithelial and subepithelial cells of small intestine.

The protein localises to the cell membrane. It is found in the nucleus. The protein resides in the golgi apparatus. It localises to the trans-Golgi network. Its function is as follows. Mediates transcriptional and post-transcriptional regulation of SLC5A1. Inhibits a dynamin and PKC-dependent exocytotic pathway of SLC5A1. Also involved in transcriptional regulation of SLC22A2. Exhibits glucose-dependent, short-term inhibition of SLC5A1 and SLC22A2 by inhibiting the release of vesicles from the trans-Golgi network. Regulates the expression of SLC5A1 in a tissue-specific manner and is specifically involved in its regulation in the small intestine. This is Regulatory solute carrier protein family 1 member 1 (Rsc1a1) from Mus musculus (Mouse).